We begin with the raw amino-acid sequence, 104 residues long: Phosphoribosyl-ATP pyrophosphatase (104 aa).

Belongs to the PRA-PH family.

The protein resides in the cytoplasm. The enzyme catalyses 1-(5-phospho-beta-D-ribosyl)-ATP + H2O = 1-(5-phospho-beta-D-ribosyl)-5'-AMP + diphosphate + H(+). It participates in amino-acid biosynthesis; L-histidine biosynthesis; L-histidine from 5-phospho-alpha-D-ribose 1-diphosphate: step 2/9. In Streptococcus thermophilus (strain ATCC BAA-491 / LMD-9), this protein is Phosphoribosyl-ATP pyrophosphatase.